A 425-amino-acid chain; its full sequence is Serine--tRNA ligase (425 aa).

232–234 (TSE) contacts L-serine. ATP-binding positions include 263–265 (RRE) and valine 279. Residue glutamate 286 participates in L-serine binding. 350-353 (EVVS) serves as a coordination point for ATP. Threonine 387 is an L-serine binding site.

It belongs to the class-II aminoacyl-tRNA synthetase family. Type-1 seryl-tRNA synthetase subfamily. Homodimer. The tRNA molecule binds across the dimer.

Its subcellular location is the cytoplasm. It catalyses the reaction tRNA(Ser) + L-serine + ATP = L-seryl-tRNA(Ser) + AMP + diphosphate + H(+). It carries out the reaction tRNA(Sec) + L-serine + ATP = L-seryl-tRNA(Sec) + AMP + diphosphate + H(+). It functions in the pathway aminoacyl-tRNA biosynthesis; selenocysteinyl-tRNA(Sec) biosynthesis; L-seryl-tRNA(Sec) from L-serine and tRNA(Sec): step 1/1. Functionally, catalyzes the attachment of serine to tRNA(Ser). Is also able to aminoacylate tRNA(Sec) with serine, to form the misacylated tRNA L-seryl-tRNA(Sec), which will be further converted into selenocysteinyl-tRNA(Sec). The chain is Serine--tRNA ligase from Methanospirillum hungatei JF-1 (strain ATCC 27890 / DSM 864 / NBRC 100397 / JF-1).